The following is a 428-amino-acid chain: UPF0229 protein YeaH (428 aa).

Over residues 78-90 (GNDHFIQNDRIER) the composition is skewed to basic and acidic residues. A disordered region spans residues 78-111 (GNDHFIQNDRIERPQGGGGGGSGSGQGQASQDGE). A compositionally biased stretch (gly residues) spans 92–103 (QGGGGGGSGSGQ).

This sequence belongs to the UPF0229 family.

This Salmonella paratyphi C (strain RKS4594) protein is UPF0229 protein YeaH.